The following is a 623-amino-acid chain: Glucokinase regulatory protein (623 aa).

2 SIS domains span residues 90–286 (VQEV…QGVV) and 320–476 (VGIS…VQKF). Residues 109 to 110 (TS), glutamate 153, and 179 to 181 (SVG) contribute to the beta-D-fructose 1-phosphate site. 109–110 (TS) contacts beta-D-fructose 6-phosphate. 179–181 (SVG) lines the beta-D-fructose 6-phosphate pocket. Residues 199–200 (AV) are important for interaction with GCK. Glutamate 348 serves as a coordination point for beta-D-fructose 1-phosphate. The interval 463-465 (LLF) is essential for interaction with GCK.

This sequence belongs to the GCKR family. In terms of assembly, interacts (fructose 6-phosphate bound form) with GCK.

It is found in the cytoplasm. The protein resides in the nucleus. Its subcellular location is the mitochondrion. In terms of biological role, regulates glucokinase (GCK) by forming an inactive complex with this enzyme. Acts by promoting GCK recruitment to the nucleus, possibly to provide a reserve of GCK that can be quickly released in the cytoplasm after a meal. The affinity of GCKR for GCK is modulated by fructose metabolites: GCKR with bound fructose 6-phosphate has increased affinity for GCK, while GCKR with bound fructose 1-phosphate has strongly decreased affinity for GCK and does not inhibit GCK activity. This chain is Glucokinase regulatory protein, found in Mus musculus (Mouse).